The primary structure comprises 104 residues: Large ribosomal subunit protein uL24 (104 aa).

Belongs to the universal ribosomal protein uL24 family. As to quaternary structure, part of the 50S ribosomal subunit.

Its function is as follows. One of two assembly initiator proteins, it binds directly to the 5'-end of the 23S rRNA, where it nucleates assembly of the 50S subunit. One of the proteins that surrounds the polypeptide exit tunnel on the outside of the subunit. The protein is Large ribosomal subunit protein uL24 of Bartonella quintana (strain Toulouse) (Rochalimaea quintana).